The chain runs to 159 residues: Eukaryotic translation initiation factor 5A-2 (159 aa).

Over residues Met1–Pro10 the composition is skewed to basic and acidic residues. A disordered region spans residues Met1 to Pro21. Position 52 is a hypusine (Lys52).

It belongs to the eIF-5A family. Lys-52 undergoes hypusination, a unique post-translational modification that consists in the addition of a butylamino group from spermidine to lysine side chain, leading to the formation of the unusual amino acid hypusine. eIF-5As are the only known proteins to undergo this modification, which is essential for their function.

Translation factor that promotes translation elongation and termination, particularly upon ribosome stalling at specific amino acid sequence contexts. Binds between the exit (E) and peptidyl (P) site of the ribosome and promotes rescue of stalled ribosome: specifically required for efficient translation of polyproline-containing peptides as well as other motifs that stall the ribosome. Acts as a ribosome quality control (RQC) cofactor by joining the RQC complex to facilitate peptidyl transfer during CAT tailing step. This is Eukaryotic translation initiation factor 5A-2 from Medicago sativa (Alfalfa).